The chain runs to 148 residues: uncharacterized protein (148 aa).

Positions 25–148 constitute an ABC transmembrane type-1 domain; that stretch reads LSIGLIFSLI…YSITNIFIYN (124 aa). The next 3 membrane-spanning stretches (helical) occupy residues 26–46, 60–80, and 127–147; these read SIGL…PLII, IVII…STYI, and ITRV…IFIY.

The protein resides in the cell membrane. This is an uncharacterized protein from Staphylococcus epidermidis.